Consider the following 216-residue polypeptide: 3-isopropylmalate dehydratase small subunit (216 aa).

Belongs to the LeuD family. LeuD type 1 subfamily. As to quaternary structure, heterodimer of LeuC and LeuD.

It carries out the reaction (2R,3S)-3-isopropylmalate = (2S)-2-isopropylmalate. The protein operates within amino-acid biosynthesis; L-leucine biosynthesis; L-leucine from 3-methyl-2-oxobutanoate: step 2/4. Its function is as follows. Catalyzes the isomerization between 2-isopropylmalate and 3-isopropylmalate, via the formation of 2-isopropylmaleate. In Albidiferax ferrireducens (strain ATCC BAA-621 / DSM 15236 / T118) (Rhodoferax ferrireducens), this protein is 3-isopropylmalate dehydratase small subunit.